Here is an 880-residue protein sequence, read N- to C-terminus: Beta-glucosidase 2 (880 aa).

Positions 1-17 (MLLILELLVLIIGLGVA) are cleaved as a signal peptide. N-linked (GlcNAc...) asparagine glycans are attached at residues Asn-24, Asn-77, and Asn-271. The active site involves Asp-299. N-linked (GlcNAc...) asparagine glycosylation is found at Asn-336, Asn-343, Asn-376, Asn-548, Asn-589, Asn-712, Asn-743, and Asn-794.

The protein belongs to the glycosyl hydrolase 3 family.

The catalysed reaction is Hydrolysis of terminal, non-reducing beta-D-glucosyl residues with release of beta-D-glucose.. The protein operates within glycan metabolism; cellulose degradation. In Saccharomycopsis fibuligera (Yeast), this protein is Beta-glucosidase 2 (BGL2).